A 503-amino-acid chain; its full sequence is Cytochrome P450 7A1 (503 aa).

Residues 4–24 (ISLIWGIAVVVSCCIWFIIGI) traverse the membrane as a helical segment. Cysteine 444 is a heme binding site.

This sequence belongs to the cytochrome P450 family. It depends on heme as a cofactor.

Its subcellular location is the endoplasmic reticulum membrane. The protein localises to the microsome membrane. The enzyme catalyses cholesterol + reduced [NADPH--hemoprotein reductase] + O2 = 7alpha-hydroxycholesterol + oxidized [NADPH--hemoprotein reductase] + H2O + H(+). It catalyses the reaction 4beta-hydroxycholesterol + reduced [NADPH--hemoprotein reductase] + O2 = 4beta,7alpha-dihydroxycholesterol + oxidized [NADPH--hemoprotein reductase] + H2O + H(+). The catalysed reaction is lathosterol + reduced [NADPH--hemoprotein reductase] + O2 = 7alpha,8alpha-epoxy-5alpha-cholestan-3beta-ol + oxidized [NADPH--hemoprotein reductase] + H2O + H(+). It carries out the reaction lathosterol + reduced [NADPH--hemoprotein reductase] + O2 = 5alpha-cholestan-7-oxo-3beta-ol + oxidized [NADPH--hemoprotein reductase] + H2O + H(+). The enzyme catalyses 7-dehydrocholesterol + reduced [NADPH--hemoprotein reductase] + O2 = 7-oxocholesterol + oxidized [NADPH--hemoprotein reductase] + H2O + H(+). It catalyses the reaction (24S)-hydroxycholesterol + reduced [NADPH--hemoprotein reductase] + O2 = (24S)-7alpha-dihydroxycholesterol + oxidized [NADPH--hemoprotein reductase] + H2O + H(+). The catalysed reaction is (24R)-hydroxycholesterol + reduced [NADPH--hemoprotein reductase] + O2 = (24R)-7alpha-dihydroxycholesterol + oxidized [NADPH--hemoprotein reductase] + H2O + H(+). It participates in lipid metabolism; bile acid biosynthesis. It functions in the pathway steroid metabolism; cholesterol degradation. In terms of biological role, a cytochrome P450 monooxygenase involved in the metabolism of endogenous cholesterol and its oxygenated derivatives (oxysterols). Mechanistically, uses molecular oxygen inserting one oxygen atom into a substrate, and reducing the second into a water molecule, with two electrons provided by NADPH via cytochrome P450 reductase (CPR; NADPH-ferrihemoprotein reductase). Functions as a critical regulatory enzyme of bile acid biosynthesis and cholesterol homeostasis. Catalyzes the hydroxylation of carbon hydrogen bond at 7-alpha position of cholesterol, a rate-limiting step in cholesterol catabolism and bile acid biosynthesis. 7-alpha hydroxylates several oxysterols, including 4beta-hydroxycholesterol and 24-hydroxycholesterol. Catalyzes the oxidation of the 7,8 double bond of 7-dehydrocholesterol and lathosterol with direct and predominant formation of the 7-keto derivatives. This chain is Cytochrome P450 7A1, found in Mus musculus (Mouse).